We begin with the raw amino-acid sequence, 520 residues long: Macrophage receptor MARCO (520 aa).

The Cytoplasmic portion of the chain corresponds to 1 to 43 (MRNKKILKEDELLSETQQAAFHQIAMEPFEINVPKPKRRNGVN). The helical; Signal-anchor for type II membrane protein transmembrane segment at 44 to 64 (FSLAVVVIYLILLTAGAGLLV) threads the bilayer. Over 65–520 (VQVLNLQARL…EEDAGVECSV (456 aa)) the chain is Extracellular. N-linked (GlcNAc...) asparagine glycans are attached at residues N83 and N136. The tract at residues 142–423 (GMFRIKGEQG…KGERGENSVS (282 aa)) is disordered. Positions 147-419 (KGEQGAPGLQ…VKGEKGERGE (273 aa)) constitute a Collagen-like domain. Composition is skewed to low complexity over residues 203–227 (EAGL…PQGE), 290–345 (LAGF…PGAT), and 380–398 (SPGL…QKGD). Residues 410–419 (VKGEKGERGE) show a composition bias toward basic and acidic residues. An SRCR domain is found at 424 to 519 (VRIVGSSNRG…HEEDAGVECS (96 aa)). Intrachain disulfides connect C447/C508, C460/C518, and C488/C498.

Homotrimer; disulfide-linked. Trimers may assemble in larger oligomers thus resulting in the creation of a large surface capable of interacting with very large ligands. N-glycosylated. Expressed in alveolar macrophages (at protein level). Detected in macrophages from various tissues including thymus, kidney, Kupffer cells of liver, and spleen.

Its subcellular location is the cell membrane. Pattern recognition receptor (PRR) which binds Gram-positive and Gram-negative bacteria. Also plays a role in binding of unopsonized particles by alveolar macrophages. Binds to the secretoglobin SCGB3A2. This chain is Macrophage receptor MARCO (MARCO), found in Homo sapiens (Human).